Here is a 341-residue protein sequence, read N- to C-terminus: N-acetyl-gamma-glutamyl-phosphate reductase (341 aa).

The active site involves Cys-147.

It belongs to the NAGSA dehydrogenase family. Type 1 subfamily.

It is found in the cytoplasm. It catalyses the reaction N-acetyl-L-glutamate 5-semialdehyde + phosphate + NADP(+) = N-acetyl-L-glutamyl 5-phosphate + NADPH + H(+). It participates in amino-acid biosynthesis; L-arginine biosynthesis; N(2)-acetyl-L-ornithine from L-glutamate: step 3/4. Its function is as follows. Catalyzes the NADPH-dependent reduction of N-acetyl-5-glutamyl phosphate to yield N-acetyl-L-glutamate 5-semialdehyde. The sequence is that of N-acetyl-gamma-glutamyl-phosphate reductase from Dehalococcoides mccartyi (strain ATCC BAA-2100 / JCM 16839 / KCTC 5957 / BAV1).